The primary structure comprises 96 residues: MTSKLAIALLATFMLSAALCEAAVLSRSGTELRCLCINTHSTYFHPRVIKELRVIESGPHCPNTEIMSVKLVNGAEVCLDPKQKWVQKVVELFLKR.

Positions 1 to 22 are cleaved as a signal peptide; the sequence is MTSKLAIALLATFMLSAALCEA. Arg-27 carries the citrulline modification. Intrachain disulfides connect Cys-34–Cys-61 and Cys-36–Cys-78.

This sequence belongs to the intercrine alpha (chemokine CxC) family. Homodimer. Interacts with TNFAIP6 (via Link domain); this interaction interferes with chemokine binding to glycosaminoglycans. Citrullination at Arg-27 prevents proteolysis, and dampens tissue inflammation, it also enhances leukocytosis, possibly through impaired chemokine clearance from the blood circulation.

It localises to the secreted. Functionally, chemotactic factor that mediates inflammatory response by attracting neutrophils, basophils, and T-cells to clear pathogens and protect the host from infection. Also plays an important role in neutrophil activation. Released in response to an inflammatory stimulus, exerts its effect by binding to the G-protein-coupled receptors CXCR1 and CXCR2, primarily found in neutrophils, monocytes and endothelial cells. G-protein heterotrimer (alpha, beta, gamma subunits) constitutively binds to CXCR1/CXCR2 receptor and activation by IL8 leads to beta and gamma subunits release from Galpha (GNAI2 in neutrophils) and activation of several downstream signaling pathways including PI3K and MAPK pathways. The protein is Interleukin-8 (CXCL8) of Dasypus novemcinctus (Nine-banded armadillo).